Here is a 154-residue protein sequence, read N- to C-terminus: Large ribosomal subunit protein uL11 (154 aa).

This sequence belongs to the universal ribosomal protein uL11 family. In terms of assembly, part of the ribosomal stalk of the 50S ribosomal subunit. Interacts with L10 and the large rRNA to form the base of the stalk. L10 forms an elongated spine to which L12 dimers bind in a sequential fashion forming a multimeric L10(L12)X complex. In terms of processing, one or more lysine residues are methylated.

Forms part of the ribosomal stalk which helps the ribosome interact with GTP-bound translation factors. This is Large ribosomal subunit protein uL11 from Leuconostoc mesenteroides subsp. mesenteroides (strain ATCC 8293 / DSM 20343 / BCRC 11652 / CCM 1803 / JCM 6124 / NCDO 523 / NBRC 100496 / NCIMB 8023 / NCTC 12954 / NRRL B-1118 / 37Y).